The chain runs to 197 residues: Adenylate kinase (197 aa).

Position 12-17 (12-17 (GSGKTT)) interacts with ATP. Positions 34–63 (STGDMLREEVASGSELGKTIESYIAKGALV) are NMP. Residues Thr-35, Arg-40, 61–63 (ALV), 88–91 (GYPR), and Gln-95 each bind AMP. The interval 130 to 144 (GRRAEAAPGEERSDD) is LID. Residue Arg-131 coordinates ATP. Residues Arg-141 and Arg-152 each coordinate AMP. ATP is bound at residue Arg-180.

It belongs to the adenylate kinase family. As to quaternary structure, monomer.

The protein localises to the cytoplasm. The catalysed reaction is AMP + ATP = 2 ADP. It participates in purine metabolism; AMP biosynthesis via salvage pathway; AMP from ADP: step 1/1. Catalyzes the reversible transfer of the terminal phosphate group between ATP and AMP. Plays an important role in cellular energy homeostasis and in adenine nucleotide metabolism. The protein is Adenylate kinase of Sulfurovum sp. (strain NBC37-1).